Here is a 510-residue protein sequence, read N- to C-terminus: ATP synthase subunit alpha 1 (510 aa).

167–174 (GDRATGKT) lines the ATP pocket.

The protein belongs to the ATPase alpha/beta chains family. F-type ATPases have 2 components, CF(1) - the catalytic core - and CF(0) - the membrane proton channel. CF(1) has five subunits: alpha(3), beta(3), gamma(1), delta(1), epsilon(1). CF(0) has three main subunits: a(1), b(2) and c(9-12). The alpha and beta chains form an alternating ring which encloses part of the gamma chain. CF(1) is attached to CF(0) by a central stalk formed by the gamma and epsilon chains, while a peripheral stalk is formed by the delta and b chains.

It localises to the cell inner membrane. The catalysed reaction is ATP + H2O + 4 H(+)(in) = ADP + phosphate + 5 H(+)(out). Produces ATP from ADP in the presence of a proton gradient across the membrane. The alpha chain is a regulatory subunit. This Paraburkholderia xenovorans (strain LB400) protein is ATP synthase subunit alpha 1.